The following is a 335-amino-acid chain: Teichoic acids export ATP-binding protein TagH (335 aa).

The region spanning 26-246 (IKGLFMPKSQ…YDEFVKWFNK (221 aa)) is the ABC transporter domain. 60-67 (GINGSGKS) contacts ATP.

The protein belongs to the ABC transporter superfamily. Teichoic acids exporter (TC 3.A.1.104.1) family. As to quaternary structure, the complex is composed of two ATP-binding proteins (TagH) and two transmembrane proteins (TagG).

Its subcellular location is the cell membrane. The catalysed reaction is ATP + H2O + teichoic acidSide 1 = ADP + phosphate + teichoic acidSide 2.. Part of the ABC transporter complex TagGH involved in teichoic acids export. Responsible for energy coupling to the transport system. The sequence is that of Teichoic acids export ATP-binding protein TagH from Listeria monocytogenes serotype 4b (strain F2365).